The following is a 374-amino-acid chain: Ribosomal RNA large subunit methyltransferase G (374 aa).

The protein belongs to the methyltransferase superfamily. RlmG family.

The protein localises to the cytoplasm. The enzyme catalyses guanosine(1835) in 23S rRNA + S-adenosyl-L-methionine = N(2)-methylguanosine(1835) in 23S rRNA + S-adenosyl-L-homocysteine + H(+). Functionally, specifically methylates the guanine in position 1835 (m2G1835) of 23S rRNA. The sequence is that of Ribosomal RNA large subunit methyltransferase G from Pseudomonas fluorescens (strain Pf0-1).